The following is a 1427-amino-acid chain: DNA-directed RNA polymerase subunit beta' (1427 aa).

Positions 66, 68, 81, and 84 each coordinate Zn(2+). Residues Asp472, Asp474, and Asp476 each contribute to the Mg(2+) site. Zn(2+) contacts are provided by Cys815, Cys889, Cys896, and Cys899.

Belongs to the RNA polymerase beta' chain family. As to quaternary structure, the RNAP catalytic core consists of 2 alpha, 1 beta, 1 beta' and 1 omega subunit. When a sigma factor is associated with the core the holoenzyme is formed, which can initiate transcription. It depends on Mg(2+) as a cofactor. The cofactor is Zn(2+).

The catalysed reaction is RNA(n) + a ribonucleoside 5'-triphosphate = RNA(n+1) + diphosphate. Its function is as follows. DNA-dependent RNA polymerase catalyzes the transcription of DNA into RNA using the four ribonucleoside triphosphates as substrates. The sequence is that of DNA-directed RNA polymerase subunit beta' from Bacteroides fragilis (strain YCH46).